A 308-amino-acid polypeptide reads, in one-letter code: Ribosomal RNA large subunit methyltransferase F (308 aa).

Belongs to the methyltransferase superfamily. METTL16/RlmF family.

It localises to the cytoplasm. It carries out the reaction adenosine(1618) in 23S rRNA + S-adenosyl-L-methionine = N(6)-methyladenosine(1618) in 23S rRNA + S-adenosyl-L-homocysteine + H(+). Specifically methylates the adenine in position 1618 of 23S rRNA. The protein is Ribosomal RNA large subunit methyltransferase F of Salmonella paratyphi A (strain ATCC 9150 / SARB42).